A 178-amino-acid polypeptide reads, in one-letter code: Glucagon-1 (178 aa).

The first 21 residues, 1 to 21 (MFGIHSLAGVLLLVIVQRQLA), serve as a signal peptide directing secretion. Propeptides lie at residues 83–87 (SGAPS), 123–134 (ESAEESRNGPMS), and 171–178 (SNKRQEDH).

It belongs to the glucagon family.

The protein localises to the secreted. Functionally, promotes hydrolysis of glycogen and lipids, and raises the blood sugar level. This chain is Glucagon-1 (gcg1), found in Oncorhynchus mykiss (Rainbow trout).